Here is a 657-residue protein sequence, read N- to C-terminus: Transketolase (657 aa).

His-31 is a substrate binding site. Thiamine diphosphate contacts are provided by residues His-71 and 120–122 (GPL). Asp-158 provides a ligand contact to Mg(2+). Thiamine diphosphate-binding residues include Gly-159 and Asn-188. 2 residues coordinate Mg(2+): Asn-188 and Ile-190. His-262, Arg-354, and Ser-381 together coordinate substrate. His-262 serves as a coordination point for thiamine diphosphate. Residue Glu-408 is the Proton donor of the active site. Position 434 (Phe-434) interacts with thiamine diphosphate. Substrate contacts are provided by His-458, Asp-466, and Arg-517.

Belongs to the transketolase family. In terms of assembly, homodimer. It depends on Mg(2+) as a cofactor. Ca(2+) is required as a cofactor. Requires Mn(2+) as cofactor. Co(2+) serves as cofactor. The cofactor is thiamine diphosphate.

It catalyses the reaction D-sedoheptulose 7-phosphate + D-glyceraldehyde 3-phosphate = aldehydo-D-ribose 5-phosphate + D-xylulose 5-phosphate. It participates in carbohydrate biosynthesis; Calvin cycle. The protein operates within carbohydrate degradation; pentose phosphate pathway. Catalyzes the transfer of a two-carbon ketol group from a ketose donor to an aldose acceptor, via a covalent intermediate with the cofactor thiamine pyrophosphate. In Cereibacter sphaeroides (Rhodobacter sphaeroides), this protein is Transketolase (tklB).